A 128-amino-acid chain; its full sequence is MLWKSVLPVALIVLGIHDCSFKFIEIDKNEEEFAMSMEHVLFHFNENQNDDFAYKFLRVRRSLRKKYTQKYLVDLEMGRTLCGKYDEDIDNCPLQEGPGEKKVRCTYIVETRVWVTEFTILNSTCVQT.

Positions 1–21 are cleaved as a signal peptide; that stretch reads MLWKSVLPVALIVLGIHDCSF. 2 cysteine pairs are disulfide-bonded: Cys-82/Cys-92 and Cys-105/Cys-125. Asn-122 carries N-linked (GlcNAc...) asparagine glycosylation.

Belongs to the cystatin family.

It is found in the secreted. Functionally, may play a specialized role in spermatogenesis. The protein is Cystatin-12 (Cst12) of Rattus norvegicus (Rat).